Consider the following 206-residue polypeptide: Cytochrome c biogenesis ATP-binding export protein CcmA (206 aa).

One can recognise an ABC transporter domain in the interval 4-205 (LEGIDLTCIR…AGAAIQRLQL (202 aa)). Residue 36-43 (GPNGSGKT) coordinates ATP.

The protein belongs to the ABC transporter superfamily. CcmA exporter (TC 3.A.1.107) family. In terms of assembly, the complex is composed of two ATP-binding proteins (CcmA) and two transmembrane proteins (CcmB).

It is found in the cell inner membrane. The catalysed reaction is heme b(in) + ATP + H2O = heme b(out) + ADP + phosphate + H(+). Its function is as follows. Part of the ABC transporter complex CcmAB involved in the biogenesis of c-type cytochromes; once thought to export heme, this seems not to be the case, but its exact role is uncertain. Responsible for energy coupling to the transport system. The protein is Cytochrome c biogenesis ATP-binding export protein CcmA of Nitrosospira multiformis (strain ATCC 25196 / NCIMB 11849 / C 71).